The primary structure comprises 162 residues: Large ribosomal subunit protein uL10 (162 aa).

This sequence belongs to the universal ribosomal protein uL10 family. In terms of assembly, part of the ribosomal stalk of the 50S ribosomal subunit. The N-terminus interacts with L11 and the large rRNA to form the base of the stalk. The C-terminus forms an elongated spine to which L12 dimers bind in a sequential fashion forming a multimeric L10(L12)X complex.

Forms part of the ribosomal stalk, playing a central role in the interaction of the ribosome with GTP-bound translation factors. This is Large ribosomal subunit protein uL10 from Acholeplasma laidlawii (strain PG-8A).